A 395-amino-acid chain; its full sequence is Methylmalonyl-CoA decarboxylase subunit beta (395 aa).

The next 9 membrane-spanning stretches (helical) occupy residues 17 to 37 (LNMG…LAIA), 43 to 63 (LLLV…AGMM), 103 to 123 (GIFP…GPLI), 128 to 148 (SLLL…GAIA), 180 to 200 (PHLM…VPII), 230 to 250 (IIFP…AATL), 278 to 298 (INII…AEAF), 304 to 324 (LAIL…GVLL), and 374 to 394 (GPNV…LSLF).

This sequence belongs to the GcdB/MmdB/OadB family. As to quaternary structure, the methylmalonyl-CoA decarboxylase is composed of four subunits: the carboxyltransferase alpha subunit (MmdA), the tunnel beta subunit (MmdB), the biotin-containing gamma subunit (MmdC) and the delta subunit (MmdD). The N-terminus is blocked.

It localises to the cell membrane. It catalyses the reaction (S)-methylmalonyl-CoA + Na(+)(in) + H(+)(out) = propanoyl-CoA + Na(+)(out) + CO2. Tunnel subunit of the sodium ion pump methylmalonyl-CoA decarboxylase, which converts the chemical energy of a decarboxylation reaction into an electrochemical gradient of Na(+) ions across the cytoplasmic membrane, thereby creating a sodium ion motive force that is used for ATP synthesis. The beta subunit catalyzes the decarboxylation of the carboxybiotin carrier protein and the coupled export of Na(+) ions. The chain is Methylmalonyl-CoA decarboxylase subunit beta from Propionigenium modestum.